The chain runs to 299 residues: Aspartate carbamoyltransferase catalytic subunit (299 aa).

The carbamoyl phosphate site is built by arginine 51 and threonine 52. Position 79 (lysine 79) interacts with L-aspartate. Residues arginine 101, histidine 130, and glutamine 133 each contribute to the carbamoyl phosphate site. Residues arginine 163 and arginine 215 each coordinate L-aspartate. The carbamoyl phosphate site is built by glycine 256 and proline 257.

It belongs to the aspartate/ornithine carbamoyltransferase superfamily. ATCase family. As to quaternary structure, heterododecamer (2C3:3R2) of six catalytic PyrB chains organized as two trimers (C3), and six regulatory PyrI chains organized as three dimers (R2).

It catalyses the reaction carbamoyl phosphate + L-aspartate = N-carbamoyl-L-aspartate + phosphate + H(+). It functions in the pathway pyrimidine metabolism; UMP biosynthesis via de novo pathway; (S)-dihydroorotate from bicarbonate: step 2/3. Its function is as follows. Catalyzes the condensation of carbamoyl phosphate and aspartate to form carbamoyl aspartate and inorganic phosphate, the committed step in the de novo pyrimidine nucleotide biosynthesis pathway. This is Aspartate carbamoyltransferase catalytic subunit from Ehrlichia chaffeensis (strain ATCC CRL-10679 / Arkansas).